The sequence spans 224 residues: Glutathione S-transferase U1 (224 aa).

Positions 6-85 (ESVKLLGFWA…YIDQTWKNSP (80 aa)) constitute a GST N-terminal domain. Residues 16–17 (SP), 42–43 (NK), 56–57 (KV), and 69–70 (ES) each bind glutathione. Residues 90-217 (DPYEKAMARF…EKQIERMTKI (128 aa)) form the GST C-terminal domain. Thr-151 carries the phosphothreonine modification.

It belongs to the GST superfamily. Tau family.

The protein resides in the cytoplasm. The protein localises to the cytosol. It carries out the reaction RX + glutathione = an S-substituted glutathione + a halide anion + H(+). In terms of biological role, may be involved in the conjugation of reduced glutathione to a wide number of exogenous and endogenous hydrophobic electrophiles and have a detoxification role against certain herbicides. The sequence is that of Glutathione S-transferase U1 (GSTU1) from Arabidopsis thaliana (Mouse-ear cress).